A 352-amino-acid chain; its full sequence is Holliday junction branch migration complex subunit RuvB (352 aa).

Positions 5–191 (TDDFSEQRII…FGIVARLEFY (187 aa)) are large ATPase domain (RuvB-L). ATP contacts are provided by residues Leu30, Arg31, Gly72, Lys75, Thr76, Thr77, 138–140 (EDY), Arg181, Tyr191, and Arg228. Residue Thr76 participates in Mg(2+) binding. The tract at residues 192–262 (TPLELTKIVT…MADAALVMLD (71 aa)) is small ATPAse domain (RuvB-S). Residues 265–352 (PVGFDLMDRK…GPNGDLWAGQ (88 aa)) form a head domain (RuvB-H) region. DNA contacts are provided by Arg301, Arg320, and Arg325.

The protein belongs to the RuvB family. As to quaternary structure, homohexamer. Forms an RuvA(8)-RuvB(12)-Holliday junction (HJ) complex. HJ DNA is sandwiched between 2 RuvA tetramers; dsDNA enters through RuvA and exits via RuvB. An RuvB hexamer assembles on each DNA strand where it exits the tetramer. Each RuvB hexamer is contacted by two RuvA subunits (via domain III) on 2 adjacent RuvB subunits; this complex drives branch migration. In the full resolvosome a probable DNA-RuvA(4)-RuvB(12)-RuvC(2) complex forms which resolves the HJ.

The protein resides in the cytoplasm. The enzyme catalyses ATP + H2O = ADP + phosphate + H(+). The RuvA-RuvB-RuvC complex processes Holliday junction (HJ) DNA during genetic recombination and DNA repair, while the RuvA-RuvB complex plays an important role in the rescue of blocked DNA replication forks via replication fork reversal (RFR). RuvA specifically binds to HJ cruciform DNA, conferring on it an open structure. The RuvB hexamer acts as an ATP-dependent pump, pulling dsDNA into and through the RuvAB complex. RuvB forms 2 homohexamers on either side of HJ DNA bound by 1 or 2 RuvA tetramers; 4 subunits per hexamer contact DNA at a time. Coordinated motions by a converter formed by DNA-disengaged RuvB subunits stimulates ATP hydrolysis and nucleotide exchange. Immobilization of the converter enables RuvB to convert the ATP-contained energy into a lever motion, pulling 2 nucleotides of DNA out of the RuvA tetramer per ATP hydrolyzed, thus driving DNA branch migration. The RuvB motors rotate together with the DNA substrate, which together with the progressing nucleotide cycle form the mechanistic basis for DNA recombination by continuous HJ branch migration. Branch migration allows RuvC to scan DNA until it finds its consensus sequence, where it cleaves and resolves cruciform DNA. This chain is Holliday junction branch migration complex subunit RuvB, found in Janthinobacterium sp. (strain Marseille) (Minibacterium massiliensis).